The primary structure comprises 97 residues: Homeobox protein HD-9 (97 aa).

The segment at residues 6 to 65 is a DNA-binding region (homeobox); sequence MPAKKSRLSKAQRDFLDTYFEVNPHPNTQERAYIASQSLVSEEKIRNWFQNRRTRERGDC.

It is found in the nucleus. The polypeptide is Homeobox protein HD-9 (HD-9) (Encephalitozoon cuniculi (strain GB-M1) (Microsporidian parasite)).